The following is a 649-amino-acid chain: L-ornithine N(5)-monooxygenase (649 aa).

Residues 72 to 80 and glutamine 91 contribute to the FAD site; that span reads EKRGHFAWH. Lysine 96 provides a ligand contact to substrate. Residue valine 157 coordinates FAD. Residues 289-292 and arginine 314 contribute to the NADP(+) site; that span reads AGQS. Substrate is bound by residues 328–331 and asparagine 359; that span reads NSAA. Residue 359–361 coordinates NADP(+); that stretch reads NYS. The disordered stretch occupies residues 512–547; that stretch reads AMQSDAVRSGKSSPGSGSDASSTSSQQTLASENSTE. The span at 520–536 shows a compositional bias: low complexity; sequence SGKSSPGSGSDASSTSS. A compositionally biased stretch (polar residues) spans 537–547; that stretch reads QQTLASENSTE. Residue 569–571 coordinates FAD; sequence SLL. Residue serine 572 participates in substrate binding. The tract at residues 585-611 is disordered; the sequence is LLQRLPRTRRGTASSAATQPAASTVAS. The span at 596–611 shows a compositional bias: low complexity; sequence TASSAATQPAASTVAS.

It belongs to the lysine N(6)-hydroxylase/L-ornithine N(5)-oxygenase family. As to quaternary structure, homotetramer. FAD is required as a cofactor.

The catalysed reaction is L-ornithine + NADPH + O2 = N(5)-hydroxy-L-ornithine + NADP(+) + H2O. It catalyses the reaction L-ornithine + NADH + O2 = N(5)-hydroxy-L-ornithine + NAD(+) + H2O. It functions in the pathway siderophore biosynthesis; ferrichrome biosynthesis. Catalyzes the conversion of L-ornithine to N(5)-hydroxyornithine, the first step in the biosynthesis of all hydroxamate-containing siderophores, such as ferrichrome. The protein is L-ornithine N(5)-monooxygenase (SID1) of Mycosarcoma maydis (Corn smut fungus).